The primary structure comprises 290 residues: Zinc finger matrin-type protein 3 (290 aa).

2 Matrin-type zinc fingers span residues 70-100 (LFCK…KLRN) and 148-178 (DYCK…RLRL). 2 disordered regions span residues 182–203 (QSHS…EGSE) and 266–290 (ESKQ…GYVQ). The segment at 246–276 (FYCSMCNVGAGEEVEFRQHLESKQHKSKVSE) adopts a Matrin-type 3 zinc-finger fold. Residues 266–283 (ESKQHKSKVSEQRYRSEM) show a composition bias toward basic and acidic residues.

In terms of assembly, interacts with dsRNA. As to expression, constitutively expressed in brain and testis. Also expressed in lung, kidney and spleen after whole body gamma irradiation.

It is found in the nucleus. Its subcellular location is the nucleolus. Its function is as follows. Acts as a bona fide target gene of p53/TP53. May play a role in the TP53-dependent growth regulatory pathway. May contribute to TP53-mediated apoptosis by regulation of TP53 expression and translocation to the nucleus and nucleolus. This Mus musculus (Mouse) protein is Zinc finger matrin-type protein 3.